The sequence spans 318 residues: Thymidylate synthase (318 aa).

DUMP contacts are provided by residues Arg-25 and 180–181; that span reads RR. Catalysis depends on Cys-200, which acts as the Nucleophile. Residues 220 to 223, Asn-231, and 261 to 263 each bind dUMP; these read RSGD and HIY. Residue Asp-223 coordinates (6R)-5,10-methylene-5,6,7,8-tetrahydrofolate. Ala-317 contacts (6R)-5,10-methylene-5,6,7,8-tetrahydrofolate.

Belongs to the thymidylate synthase family. Bacterial-type ThyA subfamily. As to quaternary structure, homodimer.

The protein localises to the cytoplasm. It carries out the reaction dUMP + (6R)-5,10-methylene-5,6,7,8-tetrahydrofolate = 7,8-dihydrofolate + dTMP. It participates in pyrimidine metabolism; dTTP biosynthesis. In terms of biological role, catalyzes the reductive methylation of 2'-deoxyuridine-5'-monophosphate (dUMP) to 2'-deoxythymidine-5'-monophosphate (dTMP) while utilizing 5,10-methylenetetrahydrofolate (mTHF) as the methyl donor and reductant in the reaction, yielding dihydrofolate (DHF) as a by-product. This enzymatic reaction provides an intracellular de novo source of dTMP, an essential precursor for DNA biosynthesis. The protein is Thymidylate synthase of Lactobacillus acidophilus (strain ATCC 700396 / NCK56 / N2 / NCFM).